The primary structure comprises 130 residues: Small ribosomal subunit protein uS9 (130 aa).

The protein belongs to the universal ribosomal protein uS9 family.

This Bordetella avium (strain 197N) protein is Small ribosomal subunit protein uS9.